The chain runs to 101 residues: Ferredoxin-3 (101 aa).

2 consecutive 4Fe-4S ferredoxin-type domains span residues 17–46 and 70–100; these read YLMKIDEQKCIGCGRCFKVCGRDVMSLHGL and KVMALTGAENCIGCGACARVCPSECQTHAAL. [4Fe-4S] cluster contacts are provided by Cys-26, Cys-29, Cys-32, Cys-36, Cys-80, Cys-83, Cys-86, and Cys-90.

As to quaternary structure, homodimer. [4Fe-4S] cluster is required as a cofactor.

Functionally, ferredoxins are iron-sulfur proteins that transfer electrons in a wide variety of metabolic reactions. The sequence is that of Ferredoxin-3 (fdxB) from Rhodobacter capsulatus (Rhodopseudomonas capsulata).